Here is a 174-residue protein sequence, read N- to C-terminus: Adenine phosphoribosyltransferase (174 aa).

It belongs to the purine/pyrimidine phosphoribosyltransferase family. As to quaternary structure, homodimer.

The protein resides in the cytoplasm. It catalyses the reaction AMP + diphosphate = 5-phospho-alpha-D-ribose 1-diphosphate + adenine. It functions in the pathway purine metabolism; AMP biosynthesis via salvage pathway; AMP from adenine: step 1/1. In terms of biological role, catalyzes a salvage reaction resulting in the formation of AMP, that is energically less costly than de novo synthesis. The polypeptide is Adenine phosphoribosyltransferase (Phocaeicola vulgatus (strain ATCC 8482 / DSM 1447 / JCM 5826 / CCUG 4940 / NBRC 14291 / NCTC 11154) (Bacteroides vulgatus)).